The following is a 789-amino-acid chain: Potassium transporter 4 (789 aa).

Residues Met1 to Ser32 lie on the Cytoplasmic side of the membrane. Ser9 carries the phosphoserine modification. Residues Phe33–Ile53 traverse the membrane as a helical segment. Residues Gly54–Ala68 are Extracellular-facing. Residues Phe69–Leu89 form a helical membrane-spanning segment. The Cytoplasmic portion of the chain corresponds to Ser90–Thr154. A helical membrane pass occupies residues Ala155–Pro175. The Extracellular portion of the chain corresponds to Ala176 to Asp195. Residues Gly196–Gly216 form a helical membrane-spanning segment. At Thr217–Arg219 the chain is on the cytoplasmic side. A helical membrane pass occupies residues Val220 to Leu240. The Extracellular segment spans residues Tyr241–Gly270. The helical transmembrane segment at Trp271–Leu291 threads the bilayer. Over Gly292–Arg300 the chain is Cytoplasmic. A helical membrane pass occupies residues Val301–Phe321. The Extracellular segment spans residues Leu322–Pro340. A helical membrane pass occupies residues Val341–Ile361. Residues Thr362–Gln392 are Cytoplasmic-facing. Residues Ile393–Phe413 traverse the membrane as a helical segment. Over Arg414 to Gly424 the chain is Extracellular. A helical transmembrane segment spans residues Ile425–Val445. Residues Trp446–Cys450 lie on the Cytoplasmic side of the membrane. Residues Phe451–Ala471 traverse the membrane as a helical segment. The Extracellular segment spans residues Leu472–Gly478. A helical transmembrane segment spans residues Gly479–Gly499. Residues Thr500 to Val789 lie on the Cytoplasmic side of the membrane.

Belongs to the HAK/KUP transporter (TC 2.A.72.3) family. In terms of tissue distribution, detected at very low levels in roots, stems, leaves and flowers of mature plants and strongly expressed in the roots of potassium-starved plants.

The protein resides in the cell membrane. Its function is as follows. High-affinity potassium transporter. The polypeptide is Potassium transporter 4 (POT4) (Arabidopsis thaliana (Mouse-ear cress)).